A 760-amino-acid chain; its full sequence is General transcription and DNA repair factor IIH helicase subunit XPD (760 aa).

The Helicase ATP-binding domain maps to 7-283; that stretch reads GLLVYFPYDY…KETDEQRLRD (277 aa). 42-49 contacts ATP; that stretch reads MPSGTGKT. The [4Fe-4S] cluster site is built by Cys116, Cys134, Cys155, and Cys190. The DEAH box motif lies at 234 to 237; the sequence is DEAH. The segment at 438 to 637 is mediates interaction with MMS19; it reads MDASLAIKPV…TQSRILKARL (200 aa). A Nuclear localization signal motif is present at residues 682 to 695; sequence KRFARGDKRGKLPR.

This sequence belongs to the helicase family. RAD3/XPD subfamily. In terms of assembly, component of the 7-subunit TFIIH core complex composed of XPB/ERCC3, XPD/ERCC2, GTF2H1, GTF2H2, GTF2H3, GTF2H4 and GTF2H5, which is active in NER. The core complex associates with the 3-subunit CDK-activating kinase (CAK) module composed of CCNH/cyclin H, CDK7 and MNAT1 to form the 10-subunit holoenzyme (holo-TFIIH) active in transcription. Interacts with GTF2H2 (p44) which stimulates the 5'-3' helicase activity of this subunit. Component of the MMXD complex, which includes CIAO1, ERCC2, CIAO2B, MMS19 and SLC25A5. Interacts with CIAO1 and CIAO2B; the interaction WITH CIAO2B is direct. Interacts with ATF7IP. Interacts directly with MMS19. Part of TBP-based Pol II pre-initiation complex (PIC), in which Pol II core assembles with general transcription factors and other specific initiation factors including GTF2E1, GTF2E2, GTF2F1, GTF2F2, TCEA1, ERCC2, ERCC3, GTF2H2, GTF2H3, GTF2H4, GTF2H5, GTF2A1, GTF2A2, GTF2B and TBP; this large multi-subunit PIC complex mediates DNA unwinding and targets Pol II core to the transcription start site where the first phosphodiester bond forms. (Microbial infection) Interacts with Epstein-Barr virus EBNA2. Mg(2+) serves as cofactor. Requires [4Fe-4S] cluster as cofactor. ISGylated.

Its subcellular location is the nucleus. It is found in the cytoplasm. The protein localises to the cytoskeleton. It localises to the spindle. It carries out the reaction Couples ATP hydrolysis with the unwinding of duplex DNA at the replication fork by translocating in the 5'-3' direction. This creates two antiparallel DNA single strands (ssDNA). The leading ssDNA polymer is the template for DNA polymerase III holoenzyme which synthesizes a continuous strand.. It catalyses the reaction ATP + H2O = ADP + phosphate + H(+). Its activity is regulated as follows. Interaction with GTF2H2 (p44) results in stimulation of the 5'-3' helicase activity of this subunit. DNA unwinding by this subunit in TFIIH is stimulated 4-fold by XPA and 20-fold by ERCC5/XPG. In terms of biological role, ATP-dependent 5'-3' DNA helicase. Component of the general transcription and DNA repair factor IIH (TFIIH) core complex, not absolutely essential for minimal transcription in vitro. Required for transcription-coupled nucleotide excision repair (NER) of damaged DNA; recognizes damaged bases. Sequestered in chromatin on UV-damaged DNA. When complexed to CDK-activating kinase (CAK), involved in transcription by RNA polymerase II. In NER, TFIIH acts by opening DNA around the lesion to allow the excision of the damaged oligonucleotide and its replacement by a new DNA fragment. The ATP-dependent helicase activity of XPD/ERCC2 is required for DNA opening. Involved in DNA lesion verification. In transcription, TFIIH has an essential role in transcription initiation. When the pre-initiation complex (PIC) has been established, TFIIH is required for promoter opening and promoter escape. Phosphorylation of the C-terminal tail (CTD) of the largest subunit of RNA polymerase II by the kinase module CAK controls the initiation of transcription. XPD/ERCC2 acts by forming a bridge between CAK and the core-TFIIH complex. The structure of the TFIIH transcription complex differs from the NER-TFIIH complex; large movements by XPD/ERCC2 and XPB/ERCC3 are stabilized by XPA which allow this subunit to contact ssDNA. Involved in the regulation of vitamin-D receptor activity. As part of the mitotic spindle-associated MMXD complex it plays a role in chromosome segregation. Might have a role in aging process and could play a causative role in the generation of skin cancers. This chain is General transcription and DNA repair factor IIH helicase subunit XPD (ERCC2), found in Homo sapiens (Human).